The chain runs to 85 residues: Putative membrane protein insertion efficiency factor (85 aa).

Belongs to the UPF0161 family.

It localises to the cell inner membrane. Its function is as follows. Could be involved in insertion of integral membrane proteins into the membrane. The protein is Putative membrane protein insertion efficiency factor of Enterobacter sp. (strain 638).